A 267-amino-acid polypeptide reads, in one-letter code: Pyrroline-5-carboxylate reductase (267 aa).

This sequence belongs to the pyrroline-5-carboxylate reductase family.

The protein resides in the cytoplasm. The enzyme catalyses L-proline + NADP(+) = (S)-1-pyrroline-5-carboxylate + NADPH + 2 H(+). It catalyses the reaction L-proline + NAD(+) = (S)-1-pyrroline-5-carboxylate + NADH + 2 H(+). Its pathway is amino-acid biosynthesis; L-proline biosynthesis; L-proline from L-glutamate 5-semialdehyde: step 1/1. Catalyzes the reduction of 1-pyrroline-5-carboxylate (PCA) to L-proline. The polypeptide is Pyrroline-5-carboxylate reductase (Synechocystis sp. (strain ATCC 27184 / PCC 6803 / Kazusa)).